The primary structure comprises 104 residues: MKKILFLMVALATAALANDGDVANQTLKAYSMIAAGLGLGLAALGGAIGMGHTAAATIAGTARNPGLGAKLMTTMFIALAMIEAQVIYALVIALIALYANPYLG.

The next 2 membrane-spanning stretches (helical) occupy residues 31-51 (SMIAAGLGLGLAALGGAIGMG) and 75-95 (MFIALAMIEAQVIYALVIALI).

The protein belongs to the ATPase C chain family. F-type ATPases have 2 components, F(1) - the catalytic core - and F(0) - the membrane proton channel. F(1) has five subunits: alpha(3), beta(3), gamma(1), delta(1), epsilon(1). F(0) has three main subunits: a(1), b(2) and c(10-14). The alpha and beta chains form an alternating ring which encloses part of the gamma chain. F(1) is attached to F(0) by a central stalk formed by the gamma and epsilon chains, while a peripheral stalk is formed by the delta and b chains.

It is found in the cell inner membrane. In terms of biological role, f(1)F(0) ATP synthase produces ATP from ADP in the presence of a proton or sodium gradient. F-type ATPases consist of two structural domains, F(1) containing the extramembraneous catalytic core and F(0) containing the membrane proton channel, linked together by a central stalk and a peripheral stalk. During catalysis, ATP synthesis in the catalytic domain of F(1) is coupled via a rotary mechanism of the central stalk subunits to proton translocation. Key component of the F(0) channel; it plays a direct role in translocation across the membrane. A homomeric c-ring of between 10-14 subunits forms the central stalk rotor element with the F(1) delta and epsilon subunits. This is ATP synthase subunit c from Sulfurimonas denitrificans (strain ATCC 33889 / DSM 1251) (Thiomicrospira denitrificans (strain ATCC 33889 / DSM 1251)).